We begin with the raw amino-acid sequence, 189 residues long: Segregation and condensation protein B (189 aa).

It belongs to the ScpB family. Homodimer. Homodimerization may be required to stabilize the binding of ScpA to the Smc head domains. Component of a cohesin-like complex composed of ScpA, ScpB and the Smc homodimer, in which ScpA and ScpB bind to the head domain of Smc. The presence of the three proteins is required for the association of the complex with DNA.

Its subcellular location is the cytoplasm. Its function is as follows. Participates in chromosomal partition during cell division. May act via the formation of a condensin-like complex containing Smc and ScpA that pull DNA away from mid-cell into both cell halves. This Streptococcus mitis protein is Segregation and condensation protein B.